Here is a 221-residue protein sequence, read N- to C-terminus: Phosphate-specific transport system accessory protein PhoU homolog 1 (221 aa).

It belongs to the PhoU family. As to quaternary structure, homodimer.

The protein localises to the cytoplasm. Plays a role in the regulation of phosphate uptake. In this role, it may bind, possibly as a chaperone, to PhoR, PhoP or a PhoR-PhoP complex to promote dephosphorylation of phospho-PhoP, or inhibit formation of the PhoR-PhoP transitory complex. The chain is Phosphate-specific transport system accessory protein PhoU homolog 1 (phoU1) from Mycobacterium bovis (strain ATCC BAA-935 / AF2122/97).